The primary structure comprises 377 residues: S-adenosylmethionine synthase (377 aa).

His-14 contributes to the ATP binding site. A Mg(2+)-binding site is contributed by Asp-16. Glu-42 contacts K(+). Residue Gln-98 coordinates L-methionine. The tract at residues 98-108 (QSADIALGIDL) is flexible loop. Residues 162–164 (DMK), 228–229 (RF), Asp-237, 243–244 (RK), Ala-260, and Lys-264 contribute to the ATP site. Asp-237 serves as a coordination point for L-methionine. Lys-268 is a binding site for L-methionine.

It belongs to the AdoMet synthase family. As to quaternary structure, homotetramer; dimer of dimers. The cofactor is Mg(2+). Requires K(+) as cofactor.

The protein resides in the cytoplasm. It catalyses the reaction L-methionine + ATP + H2O = S-adenosyl-L-methionine + phosphate + diphosphate. The protein operates within amino-acid biosynthesis; S-adenosyl-L-methionine biosynthesis; S-adenosyl-L-methionine from L-methionine: step 1/1. Catalyzes the formation of S-adenosylmethionine (AdoMet) from methionine and ATP. The overall synthetic reaction is composed of two sequential steps, AdoMet formation and the subsequent tripolyphosphate hydrolysis which occurs prior to release of AdoMet from the enzyme. This Mesoplasma florum (strain ATCC 33453 / NBRC 100688 / NCTC 11704 / L1) (Acholeplasma florum) protein is S-adenosylmethionine synthase.